A 233-amino-acid chain; its full sequence is 5'-methylthioadenosine/S-adenosylhomocysteine nucleosidase (233 aa).

E12 acts as the Proton acceptor in catalysis. Substrate-binding positions include G78, I152, and 173-174 (ME). The Proton donor role is filled by D197.

It belongs to the PNP/UDP phosphorylase family. MtnN subfamily. Homodimer.

The catalysed reaction is S-adenosyl-L-homocysteine + H2O = S-(5-deoxy-D-ribos-5-yl)-L-homocysteine + adenine. The enzyme catalyses S-methyl-5'-thioadenosine + H2O = 5-(methylsulfanyl)-D-ribose + adenine. It carries out the reaction 5'-deoxyadenosine + H2O = 5-deoxy-D-ribose + adenine. Its pathway is amino-acid biosynthesis; L-methionine biosynthesis via salvage pathway; S-methyl-5-thio-alpha-D-ribose 1-phosphate from S-methyl-5'-thioadenosine (hydrolase route): step 1/2. Its function is as follows. Catalyzes the irreversible cleavage of the glycosidic bond in both 5'-methylthioadenosine (MTA) and S-adenosylhomocysteine (SAH/AdoHcy) to adenine and the corresponding thioribose, 5'-methylthioribose and S-ribosylhomocysteine, respectively. Also cleaves 5'-deoxyadenosine, a toxic by-product of radical S-adenosylmethionine (SAM) enzymes, into 5-deoxyribose and adenine. Thus, is required for in vivo function of the radical SAM enzymes biotin synthase and lipoic acid synthase, that are inhibited by 5'-deoxyadenosine accumulation. This chain is 5'-methylthioadenosine/S-adenosylhomocysteine nucleosidase, found in Yersinia pestis bv. Antiqua (strain Antiqua).